A 360-amino-acid chain; its full sequence is Inward rectifier potassium channel 13 (360 aa).

Topologically, residues 1-50 (MESSNCKVITPLLSQRHRRMVTKDGHSTLQTDGAPRGLVYLRDAWGTLID) are cytoplasmic. Residues 51 to 77 (MRWRWVMLVFSASFVLHWLVFAVLWYV) form a helical membrane-spanning segment. The Extracellular segment spans residues 78–105 (LAEMNGDLELDHDAPPENHTICVKYITS). Positions 106–122 (FTAAFSFSLETQLTIGY) form an intramembrane region, helical; Pore-forming. The Selectivity filter signature appears at 119-124 (TIGYGT). Residues 123 to 131 (GTMFPSGDC) lie on the Extracellular side of the membrane. The helical transmembrane segment at 132–157 (PSAIALLAIQMLLGLMLEAFITGAFV) threads the bilayer. Topologically, residues 158-360 (AKIARPKNRA…FQISETGLTE (203 aa)) are cytoplasmic. A Phosphoserine; by PKC modification is found at S201. S287 is subject to Phosphoserine; by PKA.

It belongs to the inward rectifier-type potassium channel (TC 1.A.2.1) family. KCNJ13 subfamily. Homotetramer. Phosphorylation at Ser-201 by PKC strongly inhibits ionic currents, while phosphorylation at Ser-287 by PKA increases them.

The protein localises to the membrane. The protein resides in the cell membrane. It catalyses the reaction K(+)(in) = K(+)(out). Its activity is regulated as follows. Inhibited by Ba(2+) and Cs(+), although sensitivity to those inhibitors is much lower than in other Kir channels. Functionally, inward rectifier potassium channels are characterized by a greater tendency to allow potassium to flow into the cell rather than out of it. Their voltage dependence is regulated by the concentration of extracellular potassium; as external potassium is raised, the voltage range of the channel opening shifts to more positive voltages. The inward rectification is mainly due to the blockage of outward current by internal magnesium. KCNJ13 has a very low single channel conductance, low sensitivity to block by external barium and cesium, and no dependence of its inward rectification properties on the internal blocking particle magnesium. The sequence is that of Inward rectifier potassium channel 13 (KCNJ13) from Cavia porcellus (Guinea pig).